Reading from the N-terminus, the 189-residue chain is Thymidylate kinase (189 aa).

ATP is bound at residue 7 to 14; sequence GIDTAGKS.

The protein belongs to the thymidylate kinase family.

The catalysed reaction is dTMP + ATP = dTDP + ADP. Its function is as follows. Phosphorylation of dTMP to form dTDP in both de novo and salvage pathways of dTTP synthesis. This chain is Thymidylate kinase, found in Aliarcobacter butzleri (strain RM4018) (Arcobacter butzleri).